The sequence spans 171 residues: Bursicon (171 aa).

The N-terminal stretch at 1–31 (MISSPSTPATFAAGSLVLLCLVLGGGHFALA) is a signal peptide. Intrachain disulfides connect Cys-47–Cys-96, Cys-61–Cys-110, Cys-71–Cys-131, Cys-75–Cys-133, and Cys-93–Cys-136. Residues 47-137 (CQVTPVIHVL…PLECMCRPCT (91 aa)) form the CTCK domain.

As to quaternary structure, heterodimer of burs and pburs.

Its subcellular location is the secreted. Final heterodimeric neurohormone released at the end of the molting cycle, involved in the sclerotization (tanning) of the insect cuticle, melanization and wing spreading. This Culex pipiens pipiens (Northern house mosquito) protein is Bursicon.